The chain runs to 266 residues: GTP cyclohydrolase FolE2 (266 aa).

This sequence belongs to the GTP cyclohydrolase IV family.

The catalysed reaction is GTP + H2O = 7,8-dihydroneopterin 3'-triphosphate + formate + H(+). The protein operates within cofactor biosynthesis; 7,8-dihydroneopterin triphosphate biosynthesis; 7,8-dihydroneopterin triphosphate from GTP: step 1/1. Functionally, converts GTP to 7,8-dihydroneopterin triphosphate. The chain is GTP cyclohydrolase FolE2 from Syntrophotalea carbinolica (strain DSM 2380 / NBRC 103641 / GraBd1) (Pelobacter carbinolicus).